Consider the following 339-residue polypeptide: Photosystem II assembly lipoprotein Ycf48 (339 aa).

The signal sequence occupies residues 1 to 22 (MVIVKSWQKIFTLLVVLLLCIG). C23 carries N-palmitoyl cysteine lipidation. Residue C23 is the site of S-diacylglycerol cysteine attachment.

This sequence belongs to the Ycf48 family. Part of early PSII assembly complexes which includes D1 (psbA) and PsbI; not found in mature PSII. Binds to the lumenal side of PSII complexes. Interacts with YidC.

The protein resides in the cellular thylakoid membrane. Its function is as follows. A factor required for optimal assembly of photosystem II (PSII), acting in the early stages of PSII assembly. Also plays a role in replacement of photodamaged D1 (psbA). Assists YidC in synthesis of chlorophyll-binding proteins. This chain is Photosystem II assembly lipoprotein Ycf48, found in Nostoc sp. (strain PCC 7120 / SAG 25.82 / UTEX 2576).